A 314-amino-acid chain; its full sequence is Malate dehydrogenase (314 aa).

9-15 (IGVGNVG) is an NAD(+) binding site. Residues R84 and R90 each contribute to the substrate site. NAD(+) contacts are provided by residues N97 and 120–122 (ISN). Substrate contacts are provided by N122 and R153. The active-site Proton acceptor is H177.

The protein belongs to the LDH/MDH superfamily.

The catalysed reaction is (S)-malate + NAD(+) = oxaloacetate + NADH + H(+). Functionally, catalyzes the reversible oxidation of malate to oxaloacetate. This chain is Malate dehydrogenase, found in Aliarcobacter butzleri (strain RM4018) (Arcobacter butzleri).